We begin with the raw amino-acid sequence, 317 residues long: Transcription cofactor vestigial-like protein 2 (317 aa).

Disordered stretches follow at residues C41–P76, S108–P128, T191–L214, and R253–D293. The span at S44–S57 shows a compositional bias: low complexity. Over residues I63–P76 the composition is skewed to basic and acidic residues. A compositionally biased stretch (low complexity) spans S108 to S120. A compositionally biased stretch (basic residues) spans H196–H206. Residues K272–G292 show a composition bias toward low complexity.

This sequence belongs to the vestigial family. In terms of assembly, interacts with TEFs. Binds to TEAD1/TEF1. Skeletal muscle.

It localises to the nucleus. Functionally, may act as a specific coactivator for the mammalian TEFs. May play a role in the development of skeletal muscles. The sequence is that of Transcription cofactor vestigial-like protein 2 (VGLL2) from Homo sapiens (Human).